The sequence spans 395 residues: DDB1- and CUL4-associated factor 4-like protein 2 (395 aa).

WD repeat units lie at residues 268 to 307 and 312 to 351; these read SHDSAVTSLQILQDGQFLVSSDMTGTIKLWDLRATKCVTQ and VNNSAYLPVHVNEEEGVVAAVGQDCYTRIWSLRHGHLLTT.

This Homo sapiens (Human) protein is DDB1- and CUL4-associated factor 4-like protein 2 (DCAF4L2).